Reading from the N-terminus, the 485-residue chain is MTKVRVRYAPSPTGHLHIGNARTALFNYLFARHNDGEFIIRIEDTDQKRNIEDGEKSQLENLAWLGMEWDESPAHPGEYGPYRQSERKEIYQPLIDQLLSSNRAYKCYCTPEELEAEREAQQARGEMPHYAGTCANLTPSEQAAKEAAGLEPVIRFRVPRNTEYKFDDIVKGEITFESDNIGGDFVIQKRDGMPTYNFAVAVDDHLMKISHVLRGDDHIANTPKQLMIYEAFEWTPPVFGHMTLIINSETGKKLSKRDETILQFIEQYRELGYLPEAMFNFIALLGWSPVGEEEIFSQEDLIKLFDEQRLSKSPAAFDAKKLEWINNQYMKQMDLSELTDMCIPYLVADGRVEENPSPEKIEWLKQLVSLYQPQMSYAAEIVELSNLFFNEHPVLDDAAKEFLQGETVPTVLHAFKEQLEALDVFDVPSIKAAIKAVQKETGVKGKNLFMPIRIAVSGQMHGPELGETIELLGKEKALDHLNKVL.

The short motif at 10-20 is the 'HIGH' region element; that stretch reads PSPTGHLHIGN. Positions 253 to 257 match the 'KMSKS' region motif; that stretch reads KLSKR. ATP is bound at residue lysine 256.

It belongs to the class-I aminoacyl-tRNA synthetase family. Glutamate--tRNA ligase type 1 subfamily. Monomer.

The protein localises to the cytoplasm. It carries out the reaction tRNA(Glu) + L-glutamate + ATP = L-glutamyl-tRNA(Glu) + AMP + diphosphate. Functionally, catalyzes the attachment of glutamate to tRNA(Glu) in a two-step reaction: glutamate is first activated by ATP to form Glu-AMP and then transferred to the acceptor end of tRNA(Glu). This chain is Glutamate--tRNA ligase, found in Enterococcus faecalis (strain ATCC 700802 / V583).